The chain runs to 179 residues: ATP synthase subunit delta (179 aa).

The protein belongs to the ATPase delta chain family. In terms of assembly, F-type ATPases have 2 components, F(1) - the catalytic core - and F(0) - the membrane proton channel. F(1) has five subunits: alpha(3), beta(3), gamma(1), delta(1), epsilon(1). F(0) has three main subunits: a(1), b(2) and c(10-14). The alpha and beta chains form an alternating ring which encloses part of the gamma chain. F(1) is attached to F(0) by a central stalk formed by the gamma and epsilon chains, while a peripheral stalk is formed by the delta and b chains.

The protein localises to the cell membrane. Its function is as follows. F(1)F(0) ATP synthase produces ATP from ADP in the presence of a proton or sodium gradient. F-type ATPases consist of two structural domains, F(1) containing the extramembraneous catalytic core and F(0) containing the membrane proton channel, linked together by a central stalk and a peripheral stalk. During catalysis, ATP synthesis in the catalytic domain of F(1) is coupled via a rotary mechanism of the central stalk subunits to proton translocation. In terms of biological role, this protein is part of the stalk that links CF(0) to CF(1). It either transmits conformational changes from CF(0) to CF(1) or is implicated in proton conduction. This is ATP synthase subunit delta from Clostridium botulinum (strain Alaska E43 / Type E3).